A 533-amino-acid polypeptide reads, in one-letter code: Subtilisin-like serine protease pepC (533 aa).

An N-terminal signal peptide occupies residues 1–16; that stretch reads MKGILGLSLLPLLTAA. Positions 43–136 constitute an Inhibitor I9 domain; sequence SYIVVFKKHV…IERDSEVHTM (94 aa). Positions 145–450 constitute a Peptidase S8 domain; that stretch reads PWGLARISHR…VGIYKRNELT (306 aa). Catalysis depends on charge relay system residues Asp-181 and His-213. A glycan (N-linked (GlcNAc...) asparagine) is linked at Asn-283. Cys-320 and Cys-351 are joined by a disulfide. The active-site Charge relay system is Ser-379. An N-linked (GlcNAc...) asparagine glycan is attached at Asn-435. Residues 496 to 513 show a composition bias toward polar residues; it reads KSCSPRSLVPSTARSRMP. Residues 496–519 form a disordered region; it reads KSCSPRSLVPSTARSRMPSSHRSE.

This sequence belongs to the peptidase S8 family.

This chain is Subtilisin-like serine protease pepC (pepC), found in Aspergillus niger.